The sequence spans 136 residues: Large ribosomal subunit protein bL19 (136 aa).

The protein belongs to the bacterial ribosomal protein bL19 family.

Its function is as follows. This protein is located at the 30S-50S ribosomal subunit interface and may play a role in the structure and function of the aminoacyl-tRNA binding site. This Xylella fastidiosa (strain 9a5c) protein is Large ribosomal subunit protein bL19.